Here is a 165-residue protein sequence, read N- to C-terminus: Lymphocyte antigen 6K (165 aa).

An N-terminal signal peptide occupies residues 1-17; the sequence is MALLALLLVVALPRVWT. The N-linked (GlcNAc...) asparagine glycan is linked to asparagine 20. The 95-residue stretch at 47–141 folds into the UPAR/Ly6 domain; the sequence is ERENTFECQN…VFKEYAGSMG (95 aa). Glycine 138 is lipidated: GPI-anchor amidated glycine. A propeptide spans 139–165 (removed in mature form); it reads SMGESCGGLWLAILLLLASIAAGLSLS.

In terms of assembly, interacts with TEX101. Specifically expressed in testis (at protein level).

Its subcellular location is the secreted. It localises to the cytoplasm. The protein resides in the cell membrane. The protein localises to the cytoplasmic vesicle. It is found in the secretory vesicle. Its subcellular location is the acrosome. It localises to the membrane raft. Required for sperm migration into the oviduct and male fertility by controlling binding of sperm to zona pellucida. May play a role in cell growth. In Homo sapiens (Human), this protein is Lymphocyte antigen 6K.